A 368-amino-acid chain; its full sequence is Mitogen-activated protein kinase HOG1B (368 aa).

A Protein kinase domain is found at 20 to 299 (YVNLEPVGMG…ASQALAHPYL (280 aa)). ATP is bound by residues 26–34 (VGMGAFGLV) and Lys-49. Asp-141 serves as the catalytic Proton acceptor. The residue at position 171 (Thr-171) is a Phosphothreonine. The short motif at 171-173 (TGY) is the TXY element. The residue at position 173 (Tyr-173) is a Phosphotyrosine.

Belongs to the protein kinase superfamily. Ser/Thr protein kinase family. MAP kinase subfamily. HOG1 sub-subfamily. Requires Mg(2+) as cofactor. Phosphorylated. Dually phosphorylated on Thr-171 and Tyr-173, which activates the enzyme. Rapidly dephosphorylated upon either hypo- or hyperosmotic shock.

It localises to the cytoplasm. The protein localises to the nucleus. It catalyses the reaction L-seryl-[protein] + ATP = O-phospho-L-seryl-[protein] + ADP + H(+). It carries out the reaction L-threonyl-[protein] + ATP = O-phospho-L-threonyl-[protein] + ADP + H(+). Activated by tyrosine and threonine phosphorylation. In terms of biological role, mitogen-activated protein kinase involved in a signal transduction pathway that is activated by changes in the osmolarity of the extracellular environment. Controls osmotic regulation of transcription of target genes. In Wallemia ichthyophaga (strain EXF-994 / CBS 113033), this protein is Mitogen-activated protein kinase HOG1B (HOG1B).